The following is a 1178-amino-acid chain: DNA-directed RNA polymerase subunit beta (1178 aa).

Residues 1 to 37 are disordered; the sequence is MLEGCILADSRQSKTAASPSPSRPQSSSNNSVPGAPN. The segment covering 18–33 has biased composition (low complexity); it reads SPSPSRPQSSSNNSVP.

The protein belongs to the RNA polymerase beta chain family. In terms of assembly, the RNAP catalytic core consists of 2 alpha, 1 beta, 1 beta' and 1 omega subunit. When a sigma factor is associated with the core the holoenzyme is formed, which can initiate transcription.

The catalysed reaction is RNA(n) + a ribonucleoside 5'-triphosphate = RNA(n+1) + diphosphate. DNA-dependent RNA polymerase catalyzes the transcription of DNA into RNA using the four ribonucleoside triphosphates as substrates. The chain is DNA-directed RNA polymerase subunit beta from Mycobacterium tuberculosis (strain CDC 1551 / Oshkosh).